Here is a 130-residue protein sequence, read N- to C-terminus: Small ribosomal subunit protein uS8 (130 aa).

Belongs to the universal ribosomal protein uS8 family. In terms of assembly, part of the 30S ribosomal subunit. Contacts proteins S5 and S12.

Its function is as follows. One of the primary rRNA binding proteins, it binds directly to 16S rRNA central domain where it helps coordinate assembly of the platform of the 30S subunit. The chain is Small ribosomal subunit protein uS8 from Pseudomonas putida (strain ATCC 700007 / DSM 6899 / JCM 31910 / BCRC 17059 / LMG 24140 / F1).